The primary structure comprises 207 residues: Guanylate kinase (207 aa).

Positions 5–185 (GFVLLISGPS…SYEALRAILI (181 aa)) constitute a Guanylate kinase-like domain. 12 to 19 (GPSGAGKS) provides a ligand contact to ATP.

The protein belongs to the guanylate kinase family.

The protein resides in the cytoplasm. The enzyme catalyses GMP + ATP = GDP + ADP. Its function is as follows. Essential for recycling GMP and indirectly, cGMP. The polypeptide is Guanylate kinase (gmk) (Campylobacter jejuni subsp. jejuni serotype O:2 (strain ATCC 700819 / NCTC 11168)).